The following is a 360-amino-acid chain: MSQERPTFYRQELNKTIWEVPERYQNLSPVGSGAYGSVCAAFDTKTGLRVAVKKLSRPFQSIIHAKRTYRELRLLKHMKHENVIGLLDVFTPARSLEEFNDVYLVTHLMGADLNNIVKCQKLTDDHVQFLIYQILRGLKYIHSADIIHRDLKPSNLAVNEDCELKILDFGLARHTDDEMTGYVATRWYRAPEIMLNWMHYNQTVDIWSVGCIMAELLTGRTLFPGTDHIDQLKLILRLVGTPGADLLKKISSESARNYIQSLTQMPKMNFANVFIGANPLAVDLLEKMLVLDSDKRITAAQALAHAYFAQYHDPDDEPVADPYDQSFESRDLLIDEWKSLTYDEVVSFVPPPLDQEEMES.

At serine 2 the chain carries N-acetylserine. A Phosphoserine modification is found at serine 2. Threonine 16 bears the Phosphothreonine mark. A Protein kinase domain is found at 24-308; that stretch reads YQNLSPVGSG…AAQALAHAYF (285 aa). Residues 30–38 and lysine 53 contribute to the ATP site; that span reads VGSGAYGSV. Lysine 53 bears the N6-acetyllysine mark. Catalysis depends on aspartate 150, which acts as the Proton acceptor. Lysine 152 is modified (N6-acetyllysine). Phosphothreonine; by MAP2K3, MAP2K4, MAP2K6 and autocatalysis is present on threonine 180. The TXY motif lies at 180-182; the sequence is TGY. A Phosphotyrosine; by MAP2K3, MAP2K4, MAP2K6 and autocatalysis modification is found at tyrosine 182. Phosphothreonine is present on threonine 263. At tyrosine 323 the chain carries Phosphotyrosine; by ZAP70.

It belongs to the protein kinase superfamily. CMGC Ser/Thr protein kinase family. MAP kinase subfamily. Component of a signaling complex containing at least AKAP13, PKN1, MAPK14, ZAK and MAP2K3. Within this complex, AKAP13 interacts directly with PKN1, which in turn recruits MAPK14, MAP2K3 and ZAK. Binds to a kinase interaction motif within the protein tyrosine phosphatase, PTPRR. This interaction retains MAPK14 in the cytoplasm and prevents nuclear accumulation. Interacts with SPAG9 and GADD45A. Interacts with CDC25B, CDC25C, DUSP1, DUSP10, DUSP16, NP60, SUPT20H and TAB1. Interacts with casein kinase II subunits CSNK2A1 and CSNK2B. Interacts with PPM1D. Interacts with CDK5RAP3; recruits PPM1D to MAPK14 and may regulate its dephosphorylation. Interacts with DUSP2; this interaction does not lead to catalytic activation of DUSP2 and dephosphrylation of MAPK14. Requires Mg(2+) as cofactor. Post-translationally, dually phosphorylated on Thr-180 and Tyr-182 by the MAP2Ks MAP2K3/MKK3, MAP2K4/MKK4 and MAP2K6/MKK6 in response to inflammatory citokines, environmental stress or growth factors, which activates the enzyme. Dual phosphorylation can also be mediated by TAB1-mediated autophosphorylation. TCR engagement in T-cells also leads to Tyr-323 phosphorylation by ZAP70. Dephosphorylated and inactivated by DUPS1, DUSP10 and DUSP16. PPM1D also mediates dephosphorylation and inactivation of MAPK14. Acetylated at Lys-53 and Lys-152 by KAT2B and EP300. Acetylation at Lys-53 increases the affinity for ATP and enhances kinase activity. Lys-53 and Lys-152 are deacetylated by HDAC3. In terms of processing, ubiquitinated. Ubiquitination leads to degradation by the proteasome pathway.

Its subcellular location is the cytoplasm. The protein localises to the nucleus. It catalyses the reaction L-seryl-[protein] + ATP = O-phospho-L-seryl-[protein] + ADP + H(+). It carries out the reaction L-threonyl-[protein] + ATP = O-phospho-L-threonyl-[protein] + ADP + H(+). Activated by cell stresses such as DNA damage, heat shock, osmotic shock, anisomycin and sodium arsenite, as well as pro-inflammatory stimuli such as bacterial lipopolysaccharide (LPS) and interleukin-1. Activation occurs through dual phosphorylation of Thr-180 and Tyr-182 by either of two dual specificity kinases, MAP2K3/MKK3 or MAP2K6/MKK6, and potentially also MAP2K4/MKK4, as well as by TAB1-mediated autophosphorylation. MAPK14 phosphorylated on both Thr-180 and Tyr-182 is 10-20-fold more active than MAPK14 phosphorylated only on Thr-180, whereas MAPK14 phosphorylated on Tyr-182 alone is inactive. whereas Thr-180 is necessary for catalysis, Tyr-182 may be required for auto-activation and substrate recognition. Phosphorylated at Tyr-323 by ZAP70 in an alternative activation pathway in response to TCR signaling in T-cells. This alternative pathway is inhibited by GADD45A. Inhibited by dual specificity phosphatases, such as DUSP1, DUSP10, and DUSP16. Specifically inhibited by the binding of pyridinyl-imidazole compounds, which are cytokine-suppressive anti-inflammatory drugs (CSAID). SB203580 is an inhibitor of MAPK14. Its function is as follows. Serine/threonine kinase which acts as an essential component of the MAP kinase signal transduction pathway. MAPK14 is one of the four p38 MAPKs which play an important role in the cascades of cellular responses evoked by extracellular stimuli such as pro-inflammatory cytokines or physical stress leading to direct activation of transcription factors. Accordingly, p38 MAPKs phosphorylate a broad range of proteins and it has been estimated that they may have approximately 200 to 300 substrates each. Some of the targets are downstream kinases which are activated through phosphorylation and further phosphorylate additional targets. RPS6KA5/MSK1 and RPS6KA4/MSK2 can directly phosphorylate and activate transcription factors such as CREB1, ATF1, the NF-kappa-B isoform RELA/NFKB3, STAT1 and STAT3, but can also phosphorylate histone H3 and the nucleosomal protein HMGN1. RPS6KA5/MSK1 and RPS6KA4/MSK2 play important roles in the rapid induction of immediate-early genes in response to stress or mitogenic stimuli, either by inducing chromatin remodeling or by recruiting the transcription machinery. On the other hand, two other kinase targets, MAPKAPK2/MK2 and MAPKAPK3/MK3, participate in the control of gene expression mostly at the post-transcriptional level, by phosphorylating ZFP36 (tristetraprolin) and ELAVL1, and by regulating EEF2K, which is important for the elongation of mRNA during translation. MKNK1/MNK1 and MKNK2/MNK2, two other kinases activated by p38 MAPKs, regulate protein synthesis by phosphorylating the initiation factor EIF4E2. MAPK14 also interacts with casein kinase II, leading to its activation through autophosphorylation and further phosphorylation of TP53/p53. In the cytoplasm, the p38 MAPK pathway is an important regulator of protein turnover. For example, CFLAR is an inhibitor of TNF-induced apoptosis whose proteasome-mediated degradation is regulated by p38 MAPK phosphorylation. In a similar way, MAPK14 phosphorylates the ubiquitin ligase SIAH2, regulating its activity towards EGLN3. MAPK14 may also inhibit the lysosomal degradation pathway of autophagy by interfering with the intracellular trafficking of the transmembrane protein ATG9. Another function of MAPK14 is to regulate the endocytosis of membrane receptors by different mechanisms that impinge on the small GTPase RAB5A. In addition, clathrin-mediated EGFR internalization induced by inflammatory cytokines and UV irradiation depends on MAPK14-mediated phosphorylation of EGFR itself as well as of RAB5A effectors. Ectodomain shedding of transmembrane proteins is regulated by p38 MAPKs as well. In response to inflammatory stimuli, p38 MAPKs phosphorylate the membrane-associated metalloprotease ADAM17. Such phosphorylation is required for ADAM17-mediated ectodomain shedding of TGF-alpha family ligands, which results in the activation of EGFR signaling and cell proliferation. Another p38 MAPK substrate is FGFR1. FGFR1 can be translocated from the extracellular space into the cytosol and nucleus of target cells, and regulates processes such as rRNA synthesis and cell growth. FGFR1 translocation requires p38 MAPK activation. In the nucleus, many transcription factors are phosphorylated and activated by p38 MAPKs in response to different stimuli. Classical examples include ATF1, ATF2, ATF6, ELK1, PTPRH, DDIT3, TP53/p53 and MEF2C and MEF2A. The p38 MAPKs are emerging as important modulators of gene expression by regulating chromatin modifiers and remodelers. The promoters of several genes involved in the inflammatory response, such as IL6, IL8 and IL12B, display a p38 MAPK-dependent enrichment of histone H3 phosphorylation on 'Ser-10' (H3S10ph) in LPS-stimulated myeloid cells. This phosphorylation enhances the accessibility of the cryptic NF-kappa-B-binding sites marking promoters for increased NF-kappa-B recruitment. Phosphorylates CDC25B and CDC25C which is required for binding to 14-3-3 proteins and leads to initiation of a G2 delay after ultraviolet radiation. Phosphorylates TIAR following DNA damage, releasing TIAR from GADD45A mRNA and preventing mRNA degradation. The p38 MAPKs may also have kinase-independent roles, which are thought to be due to the binding to targets in the absence of phosphorylation. Protein O-Glc-N-acylation catalyzed by the OGT is regulated by MAPK14, and, although OGT does not seem to be phosphorylated by MAPK14, their interaction increases upon MAPK14 activation induced by glucose deprivation. This interaction may regulate OGT activity by recruiting it to specific targets such as neurofilament H, stimulating its O-Glc-N-acylation. Required in mid-fetal development for the growth of embryo-derived blood vessels in the labyrinth layer of the placenta. Also plays an essential role in developmental and stress-induced erythropoiesis, through regulation of EPO gene expression. Phosphorylates S100A9 at 'Thr-113'. The sequence is that of Mitogen-activated protein kinase 14 from Canis lupus familiaris (Dog).